The following is a 538-amino-acid chain: Poly [ADP-ribose] polymerase 2 (538 aa).

The WGR domain maps to 1-94; the sequence is MSIINDENGR…RDDEPVPNKY (94 aa). Residues 104-133 form a disordered region; the sequence is RQTEKEVKKEEPEPEPKVDEKNTRGRKKRG. Over residues 105 to 126 the composition is skewed to basic and acidic residues; sequence QTEKEVKKEEPEPEPKVDEKNT. Residues 148 to 285 enclose the PARP alpha-helical domain; it reads VEEVNEKLKE…GSIEASLELK (138 aa). In terms of domain architecture, PARP catalytic spans 309–535; sequence EPVSEEIAGK…VKVDRLTAKE (227 aa). A disordered region spans residues 357 to 381; sequence QEVPKKRGRKSTKTAAPTVPPPTTK.

It belongs to the ARTD/PARP family.

The protein resides in the nucleus. The catalysed reaction is NAD(+) + (ADP-D-ribosyl)n-acceptor = nicotinamide + (ADP-D-ribosyl)n+1-acceptor + H(+).. The enzyme catalyses L-aspartyl-[protein] + NAD(+) = 4-O-(ADP-D-ribosyl)-L-aspartyl-[protein] + nicotinamide. It carries out the reaction L-glutamyl-[protein] + NAD(+) = 5-O-(ADP-D-ribosyl)-L-glutamyl-[protein] + nicotinamide. With respect to regulation, inhibited by N-(6-oxo-5,6-dihydrophenanthridin-2-yl)-N,N-dimethylacetamide HCl (PJ34), 1,5-dihydroxyisoquinoline (DHQ) and 3-aminobenzamide (3AB). In terms of biological role, poly[ADP-ribose] polymerase modifies various nuclear proteins by poly(ADP-ribosyl)ation, a post-translational modification synthesized after DNA damage that appears as an obligatory step in a detection/signaling pathway leading to the reparation of DNA strand breaks and programmed cell death. The chain is Poly [ADP-ribose] polymerase 2 from Caenorhabditis elegans.